Reading from the N-terminus, the 90-residue chain is Probable Fe(2+)-trafficking protein (90 aa).

This sequence belongs to the Fe(2+)-trafficking protein family.

Could be a mediator in iron transactions between iron acquisition and iron-requiring processes, such as synthesis and/or repair of Fe-S clusters in biosynthetic enzymes. This Pseudomonas syringae pv. tomato (strain ATCC BAA-871 / DC3000) protein is Probable Fe(2+)-trafficking protein.